Consider the following 439-residue polypeptide: Taxadien-5-alpha-ol O-acetyltransferase (439 aa).

Active-site proton acceptor residues include H164 and D373.

Belongs to the plant acyltransferase family.

It carries out the reaction taxa-4(20),11-dien-5alpha-ol + acetyl-CoA = taxa-4(20),11-dien-5alpha-yl acetate + CoA. Its pathway is alkaloid biosynthesis; taxol biosynthesis; 10-deacetyl-2-debenzoylbaccatin III from taxa-4(20),11-dien-5alpha-ol: step 1/3. In Taxus cuspidata (Japanese yew), this protein is Taxadien-5-alpha-ol O-acetyltransferase (TAT).